Consider the following 267-residue polypeptide: PF03932 family protein CutC (267 aa).

This sequence belongs to the CutC family.

It localises to the cytoplasm. The polypeptide is PF03932 family protein CutC (Xylella fastidiosa (strain Temecula1 / ATCC 700964)).